We begin with the raw amino-acid sequence, 432 residues long: MTGIGNQTSGIETGVHDRAPADGEPTALPISHSPLPIPGAHARPPRFALIAGEASGDILGAGLIAQLRLRYPNAEFVGIGGDAMRGAGCQTWFDASELAVMGLTEVLRHLPRLLKLRSAFRERVLAWKPDVFIGIDAPDFNLPVERWLKQRGIKTVHYVSPSVWAWREKRAEKIAVSADLVLCLFPMEPPIYAKHGVDARFVGHPMADDIAYQADRDAARATLGLSASSTVLAVLPGSRHGEISRLGDTFLQAAWLVCEHIPNLHVLVPAANAGCKQLLAEQLSRSSLPVMRSHLINGQARTAMLAADVVLLASGTATLEAMLVKRPMVVGYKVAPLTYRIVKLLGLIKVNRYALPNILANDDLAPELMQDDCMPERLCVALLDWLKHPAKVAALQPRYLALHAALRRDASARAAEAVAGLLQGRDWSGANI.

Over residues 1 to 11 the composition is skewed to polar residues; that stretch reads MTGIGNQTSGI. Residues 1–35 form a disordered region; the sequence is MTGIGNQTSGIETGVHDRAPADGEPTALPISHSPL.

Belongs to the LpxB family.

The catalysed reaction is a lipid X + a UDP-2-N,3-O-bis[(3R)-3-hydroxyacyl]-alpha-D-glucosamine = a lipid A disaccharide + UDP + H(+). The protein operates within bacterial outer membrane biogenesis; LPS lipid A biosynthesis. Condensation of UDP-2,3-diacylglucosamine and 2,3-diacylglucosamine-1-phosphate to form lipid A disaccharide, a precursor of lipid A, a phosphorylated glycolipid that anchors the lipopolysaccharide to the outer membrane of the cell. This is Lipid-A-disaccharide synthase from Xanthomonas oryzae pv. oryzae (strain MAFF 311018).